Here is a 66-residue protein sequence, read N- to C-terminus: Large ribosomal subunit protein bL33c (66 aa).

It belongs to the bacterial ribosomal protein bL33 family.

The protein localises to the plastid. The protein resides in the chloroplast. In Carica papaya (Papaya), this protein is Large ribosomal subunit protein bL33c.